Consider the following 356-residue polypeptide: D-alanine--D-alanine ligase (356 aa).

One can recognise an ATP-grasp domain in the interval 134 to 339 (KQLFEHRGLP…YPELITKLIE (206 aa)). 167–222 (NDKLNYPVFVKPANLGSSVGISKCNNEAELKEGIKEAFQFDRKLVIEQGVNAREIE) is an ATP binding site. D293, E306, and N308 together coordinate Mg(2+).

The protein belongs to the D-alanine--D-alanine ligase family. It depends on Mg(2+) as a cofactor. Mn(2+) serves as cofactor.

It localises to the cytoplasm. It carries out the reaction 2 D-alanine + ATP = D-alanyl-D-alanine + ADP + phosphate + H(+). Its pathway is cell wall biogenesis; peptidoglycan biosynthesis. Its function is as follows. Cell wall formation. The polypeptide is D-alanine--D-alanine ligase (Staphylococcus aureus (strain MSSA476)).